Here is a 189-residue protein sequence, read N- to C-terminus: Shikimate kinase (189 aa).

11-16 (GTGKSA) serves as a coordination point for ATP. Serine 15 is a Mg(2+) binding site. Residues aspartate 33, arginine 57, and glycine 79 each coordinate substrate. Arginine 117 is a binding site for ATP. A substrate-binding site is contributed by arginine 135.

The protein belongs to the shikimate kinase family. In terms of assembly, monomer. Mg(2+) is required as a cofactor.

It localises to the cytoplasm. The catalysed reaction is shikimate + ATP = 3-phosphoshikimate + ADP + H(+). It functions in the pathway metabolic intermediate biosynthesis; chorismate biosynthesis; chorismate from D-erythrose 4-phosphate and phosphoenolpyruvate: step 5/7. Functionally, catalyzes the specific phosphorylation of the 3-hydroxyl group of shikimic acid using ATP as a cosubstrate. The chain is Shikimate kinase from Desulforudis audaxviator (strain MP104C).